Here is an 873-residue protein sequence, read N- to C-terminus: Zinc fingers and homeoboxes protein 1 (873 aa).

A disordered region spans residues 24–63; that stretch reads LISDLDEGPPVLTPVENTRAESISSDEEVHESVDSDNQQN. Thr-36 bears the Phosphothreonine mark. Phosphoserine occurs at positions 45, 47, and 48. 2 C2H2-type zinc fingers span residues 70–93 and 102–125; these read YECK…DSEH and YVCV…LKYH. Residue Lys-159 forms a Glycyl lysine isopeptide (Lys-Gly) (interchain with G-Cter in SUMO2) linkage. The tract at residues 200-236 is disordered; it reads HNSVEDVPEEKENEIKPDREEIVENPSSSASESNTST. Ser-202 carries the phosphoserine modification. Over residues 212 to 221 the composition is skewed to basic and acidic residues; the sequence is NEIKPDREEI. Positions 223 to 236 are enriched in low complexity; the sequence is ENPSSSASESNTST. A required for dimerization region spans residues 272 to 432; sequence NSNLIPKVLI…QNNIQKSQVP (161 aa). A required for interaction with NFYA region spans residues 272–564; that stretch reads NSNLIPKVLI…AQPKQSWNPF (293 aa). The segment at residues 284-346 is a DNA-binding region (homeobox 1); it reads NSIPTYNAAL…LKHGVSWTPE (63 aa). Residues Lys-441, Lys-454, Lys-485, and Lys-629 each participate in a glycyl lysine isopeptide (Lys-Gly) (interchain with G-Cter in SUMO2) cross-link. 2 DNA-binding regions (homeobox) span residues 464–526 and 569–630; these read SFGI…KSNQ and PQKF…EEKM. 2 disordered regions span residues 626 to 667 and 732 to 769; these read KEEK…ICKK and SSMN…INNW. Ser-648 is subject to Phosphoserine. Positions 660–722 form a DNA-binding region, homeobox 4; that stretch reads STGKICKKTP…YAWKNGNLKW (63 aa). The segment at 734 to 768 is required for nuclear localization; the sequence is MNGLSSLRKRGRGRPKGRGRGRPRGRPRGSKRINN. Basic residues predominate over residues 740–764; the sequence is LRKRGRGRPKGRGRGRPRGRPRGSK. A Phosphoserine modification is found at Ser-774. Positions 777 to 832 form a DNA-binding region, homeobox 5; sequence KFKTGTAILKDYYLKHKFLNEQDLDELVNKSHMGYEQVREWFAERQRRSELGIELF. The disordered stretch occupies residues 829–873; the sequence is IELFEENEEEDEVIDDQEEDEEETDDSDTWEPPRHVKRKLSKSDD. Residues 831–857 are compositionally biased toward acidic residues; it reads LFEENEEEDEVIDDQEEDEEETDDSDT. The required for repressor activity stretch occupies residues 831–873; sequence LFEENEEEDEVIDDQEEDEEETDDSDTWEPPRHVKRKLSKSDD. Over residues 863–873 the composition is skewed to basic residues; the sequence is HVKRKLSKSDD.

This sequence belongs to the ZHX family. As to quaternary structure, forms homodimers. Heterodimer (via HD1 domain) with ZHX2 (via HD1 domain). Also forms a heterodimer with ZHX3 which is a prerequisite for repressor activity. Interacts with ATF7IP and NFYA. Interacts (via homeobox domains) with DNMT3B (via PWWP domain).

It is found in the nucleus. Its function is as follows. Acts as a transcriptional repressor. Increases DNMT3B-mediated repressive transcriptional activity when DNMT3B is tethered to DNA. May link molecule between DNMT3B and other co-repressor proteins. This Pan troglodytes (Chimpanzee) protein is Zinc fingers and homeoboxes protein 1 (ZHX1).